The chain runs to 139 residues: Large ribosomal subunit protein uL16 (139 aa).

The segment covering 1–17 has biased composition (basic residues); that stretch reads MLIPRKVKHRKQHHPGR. The segment at 1-24 is disordered; it reads MLIPRKVKHRKQHHPGRTGHATGG.

Belongs to the universal ribosomal protein uL16 family. Part of the 50S ribosomal subunit.

Functionally, binds 23S rRNA and is also seen to make contacts with the A and possibly P site tRNAs. This chain is Large ribosomal subunit protein uL16, found in Clavibacter michiganensis subsp. michiganensis (strain NCPPB 382).